Reading from the N-terminus, the 429-residue chain is Histidine--tRNA ligase (429 aa).

It belongs to the class-II aminoacyl-tRNA synthetase family. As to quaternary structure, homodimer.

The protein localises to the cytoplasm. The catalysed reaction is tRNA(His) + L-histidine + ATP = L-histidyl-tRNA(His) + AMP + diphosphate + H(+). The sequence is that of Histidine--tRNA ligase from Streptococcus pneumoniae serotype 2 (strain D39 / NCTC 7466).